The sequence spans 557 residues: NADH-quinone oxidoreductase subunit C/D (557 aa).

The segment covering 1–13 (MSLEEQQSDDPAE) has biased composition (acidic residues). Residues 1 to 20 (MSLEEQQSDDPAELESGVSR) form a disordered region. The NADH dehydrogenase I subunit C stretch occupies residues 1–174 (MSLEEQQSDD…ATLREHANPL (174 aa)). The tract at residues 184-557 (NTMYINIGPH…LDIVLGEVDR (374 aa)) is NADH dehydrogenase I subunit D. Residue lysine 517 forms a Glycyl lysine isopeptide (Lys-Gly) (interchain with G-Cter in SAMP2) linkage.

In the N-terminal section; belongs to the complex I 30 kDa subunit family. The protein in the C-terminal section; belongs to the complex I 49 kDa subunit family. In terms of assembly, NDH-1 is composed of 13 different subunits. Subunits NuoB, CD, E, F, and G constitute the peripheral sector of the complex.

It localises to the cell membrane. It catalyses the reaction a quinone + NADH + 5 H(+)(in) = a quinol + NAD(+) + 4 H(+)(out). Its function is as follows. NDH-1 shuttles electrons from NADH, via FMN and iron-sulfur (Fe-S) centers, to quinones in the respiratory chain. Couples the redox reaction to proton translocation (for every two electrons transferred, four hydrogen ions are translocated across the cytoplasmic membrane), and thus conserves the redox energy in a proton gradient. This chain is NADH-quinone oxidoreductase subunit C/D (nuoCD), found in Haloferax volcanii (strain ATCC 29605 / DSM 3757 / JCM 8879 / NBRC 14742 / NCIMB 2012 / VKM B-1768 / DS2) (Halobacterium volcanii).